We begin with the raw amino-acid sequence, 137 residues long: Drosulfakinins (137 aa).

The first 31 residues, 1-31 (MGLRSCTHFATLVIPLWALAFCFLVVVPVPA), serve as a signal peptide directing secretion. Positions 32-74 (QTNLQTSKGDRRLQDLESNMGAESDQPNANLVRPSLSRFGDKR) are excised as a propeptide. Phe81 carries the phenylalanine amide modification. The propeptide occupies 85-107 (VPRPMIPIELDLLMDNDDENTKA). A Sulfotyrosine modification is found at Tyr113. Phe118 carries the phenylalanine amide modification. The residue at position 130 (Tyr130) is a Sulfotyrosine. Phe135 is modified (phenylalanine amide).

It belongs to the gastrin/cholecystokinin family.

Its subcellular location is the secreted. Functionally, drosulfakinin-0 (DSK 0) plays diverse biological roles including regulating gut muscle contraction in adults but not in larvae. In Drosophila yakuba (Fruit fly), this protein is Drosulfakinins.